We begin with the raw amino-acid sequence, 489 residues long: Lysine--tRNA ligase (489 aa).

Residues E399 and E406 each contribute to the Mg(2+) site.

It belongs to the class-II aminoacyl-tRNA synthetase family. As to quaternary structure, homodimer. It depends on Mg(2+) as a cofactor.

Its subcellular location is the cytoplasm. It carries out the reaction tRNA(Lys) + L-lysine + ATP = L-lysyl-tRNA(Lys) + AMP + diphosphate. In Roseiflexus castenholzii (strain DSM 13941 / HLO8), this protein is Lysine--tRNA ligase.